Here is a 1129-residue protein sequence, read N- to C-terminus: Regulator of nonsense transcripts 1 (1129 aa).

Positions 1-415 (MSVEAYGPSS…LRSSVGAPVE (415 aa)) are sufficient for interaction with RENT2. Phosphoserine is present on residues S10 and S31. A disordered region spans residues 39 to 70 (TLPSQTQTPPGGPGGPGGGGAGGPGGAGAGAA). Positions 52–69 (GGPGGGGAGGPGGAGAGA) are enriched in gly residues. Residues 115 to 272 (TKDLPIHACS…NKLEELWKEN (158 aa)) enclose the Upf1 CH-rich domain. C123, C126, C137, S140, C145, H155, H159, C165, C183, C186, C209, and C213 together coordinate Zn(2+). Residues 123-155 (CSYCGIHDPACVVYCNTSKKWFCNGRGNTSGSH) form a C3H region. The interval 137 to 165 (CNTSKKWFCNGRGNTSGSHIVNHLVRAKC) is CC/SHH/C. The interval 183-213 (CYNCGCRNVFLLGFIPAKADSVVVLLCRQPC) is C4. Residues Q486 and 506–510 (GTGKT) contribute to the ATP site. S565 carries the post-translational modification Phosphoserine. Positions 676, 713, and 844 each coordinate ATP. A Phosphoserine modification is found at S956. Disordered regions lie at residues 1009 to 1058 (FGQA…VASQ) and 1073 to 1096 (SQPS…YLGD). An Omega-N-methylarginine modification is found at R1019. Residues 1025 to 1034 (KTGRGGRQKN) are compositionally biased toward basic residues. The span at 1041-1058 (PSQTNLPNSQASQDVASQ) shows a compositional bias: polar residues. The segment covering 1073–1086 (SQPSQMSQPGLSQP) has biased composition (low complexity). Phosphoserine is present on residues S1089, S1107, S1110, and S1127. 2 short sequence motifs ([ST]-Q motif) span residues 1089–1090 (SQ) and 1107–1108 (SQ). Positions 1110-1129 (STYQGERAYQHGGVTGLSQY) are disordered.

This sequence belongs to the DNA2/NAM7 helicase family. Found in a post-splicing messenger ribonucleoprotein (mRNP) complex. Associates with the exon junction complex (EJC). Associates with the SGM1C complex; is phosphorylated by the complex kinase component SGM1. Part of a complex composed of SMG1, DHX34 and UPF1; within the complex DHX34 acts as a scaffolding protein to facilitate SMG1 phosphorylation of UPF1. Interacts with UPF2. Interacts with UPF3A and UPF3B. Interacts with EST1A. Interacts with SLBP. Interacts (when hyperphosphorylated) with PNRC2. Interacts with AGO1 and AGO2. Interacts with GSPT2. Interacts with isoform 1 and isoform 5 of ADAR/ADAR1. Interacts with SMG7. Interacts with ZC3H12A; this interaction occurs in a mRNA translationally active- and termination-dependent manner and is essential for ZC3H12A-mediated degradation of target mRNAs. Interacts with CPSF6. Interacts with MOV10; the interaction is direct and RNA-dependent. Interacts with SHFL; the interaction increases in the presence of RNA. Interacts with UPF2 and DDX4; interactions are mediated by TDRD6. Interacts with DHX34 and PABPC1/PABP1; the interactions are RNA-independent. Interacts with RBM46. In terms of assembly, (Microbial infection) Interacts with human T-cell leukemia virus 1/HTLV-1 protein Tax; this interaction inhibits the host nonsense-mediated mRNA decay (NMD). Post-translationally, phosphorylated by SMG1; required for formation of mRNA surveillance complexes. Ubiquitous.

The protein resides in the cytoplasm. The protein localises to the P-body. Its subcellular location is the nucleus. It localises to the perinuclear region. It catalyses the reaction ATP + H2O = ADP + phosphate + H(+). RNA-dependent helicase required for nonsense-mediated decay (NMD) of aberrant mRNAs containing premature stop codons and modulates the expression level of normal mRNAs. Is recruited to mRNAs upon translation termination and undergoes a cycle of phosphorylation and dephosphorylation; its phosphorylation appears to be a key step in NMD. Recruited by release factors to stalled ribosomes together with the SMG1C protein kinase complex to form the transient SURF (SMG1-UPF1-eRF1-eRF3) complex. In EJC-dependent NMD, the SURF complex associates with the exon junction complex (EJC) (located 50-55 or more nucleotides downstream from the termination codon) through UPF2 and allows the formation of an UPF1-UPF2-UPF3 surveillance complex which is believed to activate NMD. Phosphorylated UPF1 is recognized by EST1B/SMG5, SMG6 and SMG7 which are thought to provide a link to the mRNA degradation machinery involving exonucleolytic and endonucleolytic pathways, and to serve as adapters to protein phosphatase 2A (PP2A), thereby triggering UPF1 dephosphorylation and allowing the recycling of NMD factors. UPF1 can also activate NMD without UPF2 or UPF3, and in the absence of the NMD-enhancing downstream EJC indicative for alternative NMD pathways. Plays a role in replication-dependent histone mRNA degradation at the end of phase S; the function is independent of UPF2. For the recognition of premature termination codons (PTC) and initiation of NMD a competitive interaction between UPF1 and PABPC1 with the ribosome-bound release factors is proposed. The ATPase activity of UPF1 is required for disassembly of mRNPs undergoing NMD. Together with UPF2 and dependent on TDRD6, mediates the degradation of mRNA harboring long 3'UTR by inducing the NMD machinery. Also capable of unwinding double-stranded DNA and translocating on single-stranded DNA. The sequence is that of Regulator of nonsense transcripts 1 from Homo sapiens (Human).